A 333-amino-acid polypeptide reads, in one-letter code: 4-hydroxyproline epimerase (333 aa).

The active-site Proton acceptor is C90. Residues 91–92 (GH) and D249 each bind substrate. C253 (proton donor) is an active-site residue. Residue 254 to 255 (GT) coordinates substrate.

This sequence belongs to the proline racemase family. Homodimer.

It carries out the reaction trans-4-hydroxy-L-proline = cis-4-hydroxy-D-proline. Its function is as follows. Allows intracellular utilization of 4-hydroxyproline, one of the major constituents of host collagen, by converting 4-hydroxy-L-proline to 4-hydroxy-D-proline, which can be further metabolized by intracellular 4-hydroxy-D-proline oxidases. Strong B-cell mitogen. Plays an important role in the regulation of intra- and extracellular amino acid pools, allowing the bacterium to profit from host precursors and enzymatic pathways. The polypeptide is 4-hydroxyproline epimerase (Brucella suis (strain ATCC 23445 / NCTC 10510)).